Here is a 453-residue protein sequence, read N- to C-terminus: Phenylalanine-4-hydroxylase (453 aa).

The residue at position 2 (A2) is an N-acetylalanine. The residue at position 16 (S16) is a Phosphoserine; by PKA. The ACT domain occupies 36–114 (SLIFSLKEEV…TVHELSRDKE (79 aa)). 3 residues coordinate Fe cation: H285, H290, and E330.

The protein belongs to the biopterin-dependent aromatic amino acid hydroxylase family. In terms of assembly, homodimer and homotetramer. Fe(2+) serves as cofactor. Phosphorylation at Ser-16 increases basal activity and facilitates activation by the substrate phenylalanine.

It carries out the reaction (6R)-L-erythro-5,6,7,8-tetrahydrobiopterin + L-phenylalanine + O2 = (4aS,6R)-4a-hydroxy-L-erythro-5,6,7,8-tetrahydrobiopterin + L-tyrosine. It participates in amino-acid degradation; L-phenylalanine degradation; acetoacetate and fumarate from L-phenylalanine: step 1/6. Its activity is regulated as follows. N-terminal region of PAH is thought to contain allosteric binding sites for phenylalanine and to constitute an 'inhibitory' domain that regulates the activity of a catalytic domain in the C-terminal portion of the molecule. Functionally, catalyzes the hydroxylation of L-phenylalanine to L-tyrosine. This Rattus norvegicus (Rat) protein is Phenylalanine-4-hydroxylase (Pah).